Here is a 1057-residue protein sequence, read N- to C-terminus: Probable E3 ubiquitin-protein ligase HERC4 (1057 aa).

RCC1 repeat units follow at residues 1–51, 52–101, 102–154, 156–207, 208–259, 261–311, and 313–366; these read MLCW…FVLD, DGTV…ALND, KGQV…ALSK, SEVF…VLTL, SGAI…ALTK, GGVF…AFVP, and SGRI…CVKR. The region spanning 730–1057 is the HECT domain; sequence KNIDYKKPLK…IDHNEGFSLI (328 aa). Cys-1025 acts as the Glycyl thioester intermediate in catalysis.

Ubiquitously expressed, highest expression is found in testis during spermiogenesis. It is specifically found in spermatogonia, spermatocytes, and spermatids with little or no expression detectable in the spermatozoa, or interstitial cells.

The protein localises to the cytoplasm. Its subcellular location is the cytosol. It catalyses the reaction S-ubiquitinyl-[E2 ubiquitin-conjugating enzyme]-L-cysteine + [acceptor protein]-L-lysine = [E2 ubiquitin-conjugating enzyme]-L-cysteine + N(6)-ubiquitinyl-[acceptor protein]-L-lysine.. It participates in protein modification; protein ubiquitination. Functionally, probable E3 ubiquitin-protein ligase involved in either protein trafficking or in the distribution of cellular structures. Required for spermatozoon maturation and fertility, and for the removal of the cytoplasmic droplet of the spermatozoon. E3 ubiquitin-protein ligases accept ubiquitin from an E2 ubiquitin-conjugating enzyme in the form of a thioester and then directly transfer it to targeted substrates. The chain is Probable E3 ubiquitin-protein ligase HERC4 (Herc4) from Mus musculus (Mouse).